A 353-amino-acid polypeptide reads, in one-letter code: Photosystem II D2 protein (353 aa).

An N-acetylthreonine modification is found at Thr-2. The residue at position 2 (Thr-2) is a Phosphothreonine. Residues 41 to 61 (CAYFALGGWFTGTTFVTSWYT) form a helical membrane-spanning segment. His-118 lines the chlorophyll a pocket. A helical membrane pass occupies residues 125 to 141 (GFMLRQFELARSVQLRP). The pheophytin a site is built by Gln-130 and Asn-143. A helical membrane pass occupies residues 153–166 (VFVSVFLIYPLGQS). His-198 contacts chlorophyll a. A helical membrane pass occupies residues 208–228 (AALLCAIHGATVENTLFEDGD). A plastoquinone-binding residues include His-215 and Phe-262. Position 215 (His-215) interacts with Fe cation. A Fe cation-binding site is contributed by His-269. The helical transmembrane segment at 279–295 (GLWMSALGVVGLALNLR) threads the bilayer.

It belongs to the reaction center PufL/M/PsbA/D family. As to quaternary structure, PSII is composed of 1 copy each of membrane proteins PsbA, PsbB, PsbC, PsbD, PsbE, PsbF, PsbH, PsbI, PsbJ, PsbK, PsbL, PsbM, PsbT, PsbX, PsbY, PsbZ, Psb30/Ycf12, at least 3 peripheral proteins of the oxygen-evolving complex and a large number of cofactors. It forms dimeric complexes. The cofactor is The D1/D2 heterodimer binds P680, chlorophylls that are the primary electron donor of PSII, and subsequent electron acceptors. It shares a non-heme iron and each subunit binds pheophytin, quinone, additional chlorophylls, carotenoids and lipids. There is also a Cl(-1) ion associated with D1 and D2, which is required for oxygen evolution. The PSII complex binds additional chlorophylls, carotenoids and specific lipids..

It localises to the plastid. The protein localises to the chloroplast thylakoid membrane. The enzyme catalyses 2 a plastoquinone + 4 hnu + 2 H2O = 2 a plastoquinol + O2. Its function is as follows. Photosystem II (PSII) is a light-driven water:plastoquinone oxidoreductase that uses light energy to abstract electrons from H(2)O, generating O(2) and a proton gradient subsequently used for ATP formation. It consists of a core antenna complex that captures photons, and an electron transfer chain that converts photonic excitation into a charge separation. The D1/D2 (PsbA/PsbD) reaction center heterodimer binds P680, the primary electron donor of PSII as well as several subsequent electron acceptors. D2 is needed for assembly of a stable PSII complex. The sequence is that of Photosystem II D2 protein from Platanus occidentalis (Sycamore).